We begin with the raw amino-acid sequence, 342 residues long: L-threonine 3-dehydrogenase (342 aa).

Residue C38 participates in Zn(2+) binding. Active-site charge relay system residues include T40 and H43. Positions 63, 64, 93, 96, 99, and 107 each coordinate Zn(2+). Residues I175, D195, R200, 262–264, and 286–287 contribute to the NAD(+) site; these read LGL and IY.

Belongs to the zinc-containing alcohol dehydrogenase family. As to quaternary structure, homotetramer. It depends on Zn(2+) as a cofactor.

The protein resides in the cytoplasm. It carries out the reaction L-threonine + NAD(+) = (2S)-2-amino-3-oxobutanoate + NADH + H(+). The protein operates within amino-acid degradation; L-threonine degradation via oxydo-reductase pathway; glycine from L-threonine: step 1/2. Functionally, catalyzes the NAD(+)-dependent oxidation of L-threonine to 2-amino-3-ketobutyrate. This is L-threonine 3-dehydrogenase from Streptomyces coelicolor (strain ATCC BAA-471 / A3(2) / M145).